The chain runs to 244 residues: Salivary antigen-5 (244 aa).

Residues 1-23 (MAKAHSSLVFCLLALALVRFAQA) form the signal peptide. The 157-residue stretch at 46-202 (LDFHNKFREL…WYTGYLVCNY (157 aa)) folds into the SCP domain. N-linked (GlcNAc...) asparagine glycans are attached at residues Asn106 and Asn172.

The protein belongs to the CRISP family. Venom allergen 5-like subfamily. In terms of tissue distribution, salivary gland (at protein level).

The protein resides in the secreted. In terms of biological role, inhibits host platelet aggregation induced by low doses of collagen. This Triatoma infestans (Assassin bug) protein is Salivary antigen-5.